A 389-amino-acid chain; its full sequence is 23S rRNA (uracil(747)-C(5))-methyltransferase RlmC (389 aa).

Residues C12, C20, C23, and C99 each contribute to the [4Fe-4S] cluster site. S-adenosyl-L-methionine contacts are provided by Q224, F253, E274, and N321. Catalysis depends on C348, which acts as the Nucleophile.

This sequence belongs to the class I-like SAM-binding methyltransferase superfamily. RNA M5U methyltransferase family. RlmC subfamily.

It catalyses the reaction uridine(747) in 23S rRNA + S-adenosyl-L-methionine = 5-methyluridine(747) in 23S rRNA + S-adenosyl-L-homocysteine + H(+). In terms of biological role, catalyzes the formation of 5-methyl-uridine at position 747 (m5U747) in 23S rRNA. This chain is 23S rRNA (uracil(747)-C(5))-methyltransferase RlmC, found in Shewanella putrefaciens (strain CN-32 / ATCC BAA-453).